Reading from the N-terminus, the 76-residue chain is Probable insulin-like peptide alpha-type 1 (76 aa).

The first 24 residues, 1–24, serve as a signal peptide directing secretion; sequence MKTYSFFVLFIVFIFFISSSKSHS. Intrachain disulfides connect Cys-32/Cys-60, Cys-44/Cys-73, and Cys-48/Cys-74.

It belongs to the insulin family.

The protein localises to the secreted. The polypeptide is Probable insulin-like peptide alpha-type 1 (ins-21) (Caenorhabditis elegans).